Reading from the N-terminus, the 399-residue chain is Phosphoglycerate kinase (399 aa).

Residues Asp22–Asn24, Arg37, His60–Arg63, Arg119, and Arg152 contribute to the substrate site. Residues Lys202, Glu324, and Gly354–Thr357 each bind ATP.

It belongs to the phosphoglycerate kinase family. As to quaternary structure, monomer.

It is found in the cytoplasm. It catalyses the reaction (2R)-3-phosphoglycerate + ATP = (2R)-3-phospho-glyceroyl phosphate + ADP. Its pathway is carbohydrate degradation; glycolysis; pyruvate from D-glyceraldehyde 3-phosphate: step 2/5. This chain is Phosphoglycerate kinase, found in Sinorhizobium medicae (strain WSM419) (Ensifer medicae).